Consider the following 415-residue polypeptide: Serine hydroxymethyltransferase (415 aa).

Residues leucine 121 and 125–127 (GHL) contribute to the (6S)-5,6,7,8-tetrahydrofolate site. Position 230 is an N6-(pyridoxal phosphate)lysine (lysine 230).

It belongs to the SHMT family. In terms of assembly, homodimer. Pyridoxal 5'-phosphate serves as cofactor.

The protein resides in the cytoplasm. The catalysed reaction is (6R)-5,10-methylene-5,6,7,8-tetrahydrofolate + glycine + H2O = (6S)-5,6,7,8-tetrahydrofolate + L-serine. The protein operates within one-carbon metabolism; tetrahydrofolate interconversion. It participates in amino-acid biosynthesis; glycine biosynthesis; glycine from L-serine: step 1/1. Functionally, catalyzes the reversible interconversion of serine and glycine with tetrahydrofolate (THF) serving as the one-carbon carrier. This reaction serves as the major source of one-carbon groups required for the biosynthesis of purines, thymidylate, methionine, and other important biomolecules. Also exhibits THF-independent aldolase activity toward beta-hydroxyamino acids, producing glycine and aldehydes, via a retro-aldol mechanism. The polypeptide is Serine hydroxymethyltransferase (Syntrophomonas wolfei subsp. wolfei (strain DSM 2245B / Goettingen)).